Here is a 1441-residue protein sequence, read N- to C-terminus: MGNGNSALLGTDLDKFEKIRLKRGGKKCYRLKHLCWCKGELDRFGLSDKLLETQQGCEKILSVCWPLYDQGSDNLKALVGTVCVVACIHAGIEIKSTQDALKKLKVITRKEEKQEDESKNFPVQRDAAGQYQYTPISPRIIQTWVKTVEEKKWKPEVIPLFSALTEGAISHDLNIMLNAVGDHQGAMQVLKDVINEQAAEWDLTHPQQQPAQPGGGLRTPSGSDIAGTTSTVEEQLAWMNMQQNAINVGTIYKSWIILGMNRLVKSHCPISITDVRQGPKEAFKDYVDRFYNVMRAEQASGEVKMWMQQHLLIENANPECKQILRSLGKGATLEEMLEACQGVGGPQHKARLMAEMMRTVVGQSQNFVQQRGPQRGPVRQPTGRKPICFNCNKEGHVARFFKAPRRKGCWNCGAMDHQKAQCPKPAQQQRVNFFRVWPLGSLQTGELSGTRGDSNSSTIRGETSAENSEHLSEIRERAQAEDEGGEERGGFSFPEYSLSRRPIEEVSVDGVTIRALLDTGADDTIFNERNIKLKGNWQPKIIGGIGGNLRVKQYDNVYVEIRGKGTFGTVLIGPTPIDIIGRNIMEKLGGKLILAQLSDKIPITKVKLKPGVDGPRIKQWPLSKEKIVGLQKICDRLEEEGKISRVDPGNNYNTPIFAIKKKDKNEWRKLIDFRELNKLTQDFHELQLGIPHPAGIKKCKRITVLDIGDAYFSIPLDPDYRPYTAFTVPSVNNQAPGKRYMYNVLPQGWKGSPCIFQGTVASLLEVFRKNHPTVQLYQYMDDLFVGSDYTAEEHEKAIVELRALLMTWNLETPEKKYQKEPPFHWMGYELHPDKWKIEKVQLPELAEQPTVNEIQKLVGKLNWAAQLYPGIKTKQLCKLIRGGLNITEKVTMTEEARLEYEQNKEILAEEQEGSYYDPNKELYVRFQKTTGGDISFQWKQGNKVLRAGKYGKQKTAHSNDLMKLAGATQKVGRESIVIWGFVPKMQIPTTREIWEDWWHEYWQCTWIPEVEFISTPMLEREWYSLSPEPLEGVETYYVDGAANRDSKMGKAGYITDRGFQRVEEYLNTTNQQTELHAVKLALEDSGSYVNIVTDSQYVVGILASRPTETDHPIVKEIIELMKGKEKIYLSWLPAHKGIGGNEQIDKLVSSGIRKVLFLQNIEPAQEEHEKYHSNEAQLREKFHLPALVAKQIVQSCSKCCHHGEPIKGQTDASLGVWQIDCTHLENQIIIVAVHVASGFMKAEVITAETGKKTAEFLLKLAAQWPISKLHTDNGPNFTSQEVETMCWWLGIEHTFGIPYNPQSQGVVENKNKYLKELIEKIREDCKELKTAVAMATFIHNFKQRGGLGGMTAGERIVNMINTELEYQYQQNQISKNLNFKVYFREGRDQLWKGPGILLWKGEGAVVLKYQEEIKIVPRRKCKIIKDYGESGKNSQVNLESV.

Glycine 2 carries N-myristoyl glycine; by host lipidation. The Nuclear export signal motif lies at phenylalanine 16 to lysine 22. The Nuclear localization signal motif lies at lysine 26–lysine 32. The segment at threonine 204–alanine 226 is disordered. CCHC-type zinc fingers lie at residues proline 386–alanine 403 and lysine 407–lysine 424. The segment covering threonine 444–glutamate 466 has biased composition (polar residues). The segment at threonine 444–proline 494 is disordered. Basic and acidic residues predominate over residues asparagine 467 to alanine 480. Residues isoleucine 513–isoleucine 584 enclose the Peptidase A2 domain. Aspartate 518 (for protease activity; shared with dimeric partner) is an active-site residue. The Reverse transcriptase domain occupies glutamate 640–leucine 830. Mg(2+) contacts are provided by aspartate 706, aspartate 781, and aspartate 782. Residues phenylalanine 823–histidine 831 are RT 'primer grip'. Residues tryptophan 994–valine 1010 carry the Tryptophan repeat motif motif. The 124-residue stretch at leucine 1030 to arginine 1153 folds into the RNase H type-1 domain. Mg(2+)-binding residues include aspartate 1039, glutamate 1074, aspartate 1094, and aspartate 1145. An Integrase-type zinc finger spans residues glutamine 1159 to cysteine 1200. Positions 1168, 1172, 1196, and 1199 each coordinate Zn(2+). An Integrase catalytic domain is found at threonine 1210–isoleucine 1360. Mg(2+)-binding residues include aspartate 1220 and aspartate 1272. Positions phenylalanine 1379–aspartate 1426 form a DNA-binding region, integrase-type.

Homotrimer. Interacts with gp41 (via C-terminus). In terms of assembly, homodimer. The active site consists of two apposed aspartic acid residues. As to quaternary structure, heterodimer of p66 RT and p51 RT (RT p66/p51). Heterodimerization of RT is essential for DNA polymerase activity. Despite the sequence identities, p66 RT and p51 RT have distinct folding. Homotetramer; may further associate as a homohexadecamer. It depends on Mg(2+) as a cofactor. Post-translationally, specific enzymatic cleavages by the viral protease yield mature proteins. The protease is released by autocatalytic cleavage. The polyprotein is cleaved during and after budding, this process is termed maturation. Proteolytic cleavage of p66 RT removes the RNase H domain to yield the p51 RT subunit. In terms of processing, capsid protein p24 is phosphorylated.

The protein resides in the virion. It localises to the host nucleus. Its subcellular location is the host cytoplasm. It is found in the host cell membrane. It carries out the reaction Specific for a P1 residue that is hydrophobic, and P1' variable, but often Pro.. The catalysed reaction is Endohydrolysis of RNA in RNA/DNA hybrids. Three different cleavage modes: 1. sequence-specific internal cleavage of RNA. Human immunodeficiency virus type 1 and Moloney murine leukemia virus enzymes prefer to cleave the RNA strand one nucleotide away from the RNA-DNA junction. 2. RNA 5'-end directed cleavage 13-19 nucleotides from the RNA end. 3. DNA 3'-end directed cleavage 15-20 nucleotides away from the primer terminus.. It catalyses the reaction 3'-end directed exonucleolytic cleavage of viral RNA-DNA hybrid.. The enzyme catalyses DNA(n) + a 2'-deoxyribonucleoside 5'-triphosphate = DNA(n+1) + diphosphate. The viral protease is inhibited by many synthetic protease inhibitors (PIs), such as amprenavir, atazanavir, indinavir, loprinavir, nelfinavir, ritonavir and saquinavir. RT can be inhibited either by nucleoside RT inhibitors (NRTIs) or by non nucleoside RT inhibitors (NNRTIs). NRTIs act as chain terminators, whereas NNRTIs inhibit DNA polymerization by binding a small hydrophobic pocket near the RT active site and inducing an allosteric change in this region. Classical NRTIs are abacavir, adefovir (PMEA), didanosine (ddI), lamivudine (3TC), stavudine (d4T), tenofovir (PMPA), zalcitabine (ddC), and zidovudine (AZT). Classical NNRTIs are atevirdine (BHAP U-87201E), delavirdine, efavirenz (DMP-266), emivirine (I-EBU), and nevirapine (BI-RG-587). The tritherapies used as a basic effective treatment of AIDS associate two NRTIs and one NNRTI. Use of protease inhibitors in tritherapy regimens permit more ambitious therapeutic strategies. In terms of biological role, gag-Pol polyprotein and Gag polyprotein may regulate their own translation, by the binding genomic RNA in the 5'-UTR. At low concentration, Gag-Pol and Gag would promote translation, whereas at high concentration, the polyproteins encapsidate genomic RNA and then shut off translation. Matrix protein p17 has two main functions: in infected cell, it targets Gag and Gag-pol polyproteins to the plasma membrane via a multipartite membrane-binding signal, that includes its myristointegration complex. The myristoylation signal and the NLS exert conflicting influences its subcellular localization. The key regulation of these motifs might be phosphorylation of a portion of MA molecules on the C-terminal tyrosine at the time of virus maturation, by virion-associated cellular tyrosine kinase. Implicated in the release from host cell mediated by Vpu. Its function is as follows. Capsid protein p24 forms the conical core that encapsulates the genomic RNA-nucleocapsid complex in the virion. The core is constituted by capsid protein hexamer subunits. The core is disassembled soon after virion entry. Interaction with host PPIA/CYPA protects the virus from restriction by host TRIM5-alpha and from an unknown antiviral activity in host cells. This capsid restriction by TRIM5 is one of the factors which restricts SIV to the simian species. Functionally, nucleocapsid protein p7 encapsulates and protects viral dimeric unspliced (genomic) RNA. Binds these RNAs through its zinc fingers. Facilitates rearangement of nucleic acid secondary structure during retrotranscription of genomic RNA. This capability is referred to as nucleic acid chaperone activity. In terms of biological role, the aspartyl protease mediates proteolytic cleavages of Gag and Gag-Pol polyproteins during or shortly after the release of the virion from the plasma membrane. Cleavages take place as an ordered, step-wise cascade to yield mature proteins. This process is called maturation. Displays maximal activity during the budding process just prior to particle release from the cell. Also cleaves Nef and Vif, probably concomitantly with viral structural proteins on maturation of virus particles. Hydrolyzes host EIF4GI and PABP1 in order to shut off the capped cellular mRNA translation. The resulting inhibition of cellular protein synthesis serves to ensure maximal viral gene expression and to evade host immune response. Reverse transcriptase/ribonuclease H (RT) is a multifunctional enzyme that converts the viral dimeric RNA genome into dsDNA in the cytoplasm, shortly after virus entry into the cell. This enzyme displays a DNA polymerase activity that can copy either DNA or RNA templates, and a ribonuclease H (RNase H) activity that cleaves the RNA strand of RNA-DNA heteroduplexes in a partially processive 3' to 5' endonucleasic mode. Conversion of viral genomic RNA into dsDNA requires many steps. A tRNA binds to the primer-binding site (PBS) situated at the 5'-end of the viral RNA. RT uses the 3' end of the tRNA primer to perform a short round of RNA-dependent minus-strand DNA synthesis. The reading proceeds through the U5 region and ends after the repeated (R) region which is present at both ends of viral RNA. The portion of the RNA-DNA heteroduplex is digested by the RNase H, resulting in a ssDNA product attached to the tRNA primer. This ssDNA/tRNA hybridizes with the identical R region situated at the 3' end of viral RNA. This template exchange, known as minus-strand DNA strong stop transfer, can be either intra- or intermolecular. RT uses the 3' end of this newly synthesized short ssDNA to perform the RNA-dependent minus-strand DNA synthesis of the whole template. RNase H digests the RNA template except for two polypurine tracts (PPTs) situated at the 5'-end and near the center of the genome. It is not clear if both polymerase and RNase H activities are simultaneous. RNase H can probably proceed both in a polymerase-dependent (RNA cut into small fragments by the same RT performing DNA synthesis) and a polymerase-independent mode (cleavage of remaining RNA fragments by free RTs). Secondly, RT performs DNA-directed plus-strand DNA synthesis using the PPTs that have not been removed by RNase H as primers. PPTs and tRNA primers are then removed by RNase H. The 3' and 5' ssDNA PBS regions hybridize to form a circular dsDNA intermediate. Strand displacement synthesis by RT to the PBS and PPT ends produces a blunt ended, linear dsDNA copy of the viral genome that includes long terminal repeats (LTRs) at both ends. Its function is as follows. Integrase catalyzes viral DNA integration into the host chromosome, by performing a series of DNA cutting and joining reactions. This enzyme activity takes place after virion entry into a cell and reverse transcription of the RNA genome in dsDNA. The first step in the integration process is 3' processing. This step requires a complex comprising the viral genome, matrix protein, Vpr and integrase. This complex is called the pre-integration complex (PIC). The integrase protein removes 2 nucleotides from each 3' end of the viral DNA, leaving recessed CA OH's at the 3' ends. In the second step, the PIC enters cell nucleus. This process is mediated through integrase and Vpr proteins, and allows the virus to infect a non dividing cell. This ability to enter the nucleus is specific of lentiviruses, other retroviruses cannot and rely on cell division to access cell chromosomes. In the third step, termed strand transfer, the integrase protein joins the previously processed 3' ends to the 5' ends of strands of target cellular DNA at the site of integration. The 5'-ends are produced by integrase-catalyzed staggered cuts, 5 bp apart. A Y-shaped, gapped, recombination intermediate results, with the 5'-ends of the viral DNA strands and the 3' ends of target DNA strands remaining unjoined, flanking a gap of 5 bp. The last step is viral DNA integration into host chromosome. This involves host DNA repair synthesis in which the 5 bp gaps between the unjoined strands are filled in and then ligated. Since this process occurs at both cuts flanking the SIV genome, a 5 bp duplication of host DNA is produced at the ends of SIV integration. Alternatively, Integrase may catalyze the excision of viral DNA just after strand transfer, this is termed disintegration. This is Gag-Pol polyprotein (gag-pol) from Cercopithecidae (Old World monkeys).